The primary structure comprises 225 residues: MTDYDRITANPHFDMLMSAHNHVQSTTQSALVPMVVEQSARGERSFDIFSRLLRERVIFLTGQVEDHMANLIVAQLLFLEAENPDKDIHLYINSPGGSVSAGLAIFDTMNFIKPEVSTICMGGAYSMGSFLLAAGQKGKRYALANARVMIHQPSGGAQGQATDIEINAREILKTRARLNEILAERTGQSVEKIEKDVERDYWLDAKEAKEYGLIDEVLERRPASL.

Serine 126 (nucleophile) is an active-site residue. Histidine 151 is an active-site residue.

The protein belongs to the peptidase S14 family. Fourteen ClpP subunits assemble into 2 heptameric rings which stack back to back to give a disk-like structure with a central cavity, resembling the structure of eukaryotic proteasomes.

The protein localises to the cytoplasm. It carries out the reaction Hydrolysis of proteins to small peptides in the presence of ATP and magnesium. alpha-casein is the usual test substrate. In the absence of ATP, only oligopeptides shorter than five residues are hydrolyzed (such as succinyl-Leu-Tyr-|-NHMec, and Leu-Tyr-Leu-|-Tyr-Trp, in which cleavage of the -Tyr-|-Leu- and -Tyr-|-Trp bonds also occurs).. Its function is as follows. Cleaves peptides in various proteins in a process that requires ATP hydrolysis. Has a chymotrypsin-like activity. Plays a major role in the degradation of misfolded proteins. The polypeptide is ATP-dependent Clp protease proteolytic subunit (Psychrobacter arcticus (strain DSM 17307 / VKM B-2377 / 273-4)).